The chain runs to 601 residues: DNA ligase (601 aa).

Aspartate 258 contacts ATP. Lysine 260 (N6-AMP-lysine intermediate) is an active-site residue. The ATP site is built by arginine 265, arginine 280, glutamate 310, phenylalanine 350, arginine 427, and lysine 433.

Belongs to the ATP-dependent DNA ligase family. Mg(2+) is required as a cofactor. It depends on Ca(2+) as a cofactor. The cofactor is Mn(2+).

The enzyme catalyses ATP + (deoxyribonucleotide)n-3'-hydroxyl + 5'-phospho-(deoxyribonucleotide)m = (deoxyribonucleotide)n+m + AMP + diphosphate.. Its function is as follows. DNA ligase that seals nicks in double-stranded DNA during DNA replication, DNA recombination and DNA repair. Also has low activity with dATP. Inactive with NAD(+), CTP, GTP, UTP, dCTP, dGTP or dTTP. This chain is DNA ligase, found in Saccharolobus shibatae (strain ATCC 51178 / DSM 5389 / JCM 8931 / NBRC 15437 / B12) (Sulfolobus shibatae).